A 121-amino-acid polypeptide reads, in one-letter code: Small ribosomal subunit protein bS16 (121 aa).

The interval 80-121 (AGVREKTERNNPNKAKPGKKAQERAEEKAAKAAEAAEAADAE) is disordered. 2 stretches are compositionally biased toward basic and acidic residues: residues 81 to 90 (GVREKTERNN) and 99 to 110 (KAQERAEEKAAK).

Belongs to the bacterial ribosomal protein bS16 family.

This Ruegeria sp. (strain TM1040) (Silicibacter sp.) protein is Small ribosomal subunit protein bS16.